A 460-amino-acid chain; its full sequence is tRNA-splicing endonuclease subunit Sen2 (460 aa).

Residues 143–215 (EKEETPQHEP…SPSSHNGHVA (73 aa)) form a disordered region. Over residues 159–170 (SSLEGRVEKDEL) the composition is skewed to basic and acidic residues. Catalysis depends on residues tyrosine 364 and histidine 372. Residues serine 403, serine 406, and serine 410 each carry the phosphoserine modification. The active site involves lysine 411.

The protein belongs to the tRNA-intron endonuclease family. In terms of assembly, tRNA splicing endonuclease is a heterotetramer composed of TSEN2, TSEN15, TSEN34/LENG5 and TSEN54. tRNA splicing endonuclease complex also contains proteins of the pre-mRNA 3'-end processing machinery such as CLP1, CPSF1, CPSF4 and CSTF2.

It is found in the nucleus. The protein resides in the nucleolus. It catalyses the reaction pretRNA = a 3'-half-tRNA molecule with a 5'-OH end + a 5'-half-tRNA molecule with a 2',3'-cyclic phosphate end + an intron with a 2',3'-cyclic phosphate and a 5'-hydroxyl terminus.. Functionally, constitutes one of the two catalytic subunit of the tRNA-splicing endonuclease complex, a complex responsible for identification and cleavage of the splice sites in pre-tRNA. It cleaves pre-tRNA at the 5'- and 3'-splice sites to release the intron. The products are an intron and two tRNA half-molecules bearing 2',3'-cyclic phosphate and 5'-OH termini. There are no conserved sequences at the splice sites, but the intron is invariably located at the same site in the gene, placing the splice sites an invariant distance from the constant structural features of the tRNA body. Probably carries the active site for 5'-splice site cleavage. The tRNA splicing endonuclease is also involved in mRNA processing via its association with pre-mRNA 3'-end processing factors, establishing a link between pre-tRNA splicing and pre-mRNA 3'-end formation, suggesting that the endonuclease subunits function in multiple RNA-processing events. In Mus musculus (Mouse), this protein is tRNA-splicing endonuclease subunit Sen2 (Tsen2).